The sequence spans 367 residues: Probable cysteine protease RD19D (367 aa).

The N-terminal stretch at 1 to 22 is a signal peptide; that stretch reads MVAKALAQLITCIILFCHVVAS. Residues 23-136 constitute a propeptide, activation peptide; sequence VEDLTIRQVT…AEAPMVEVDG (114 aa). N-linked (GlcNAc...) asparagine glycosylation is present at N61. Cystine bridges form between C158–C208 and C192–C241. Residue C161 is part of the active site. N-linked (GlcNAc...) asparagine glycosylation is present at N254. C297 and C352 are disulfide-bonded. Catalysis depends on residues H304 and N331.

Belongs to the peptidase C1 family.

In terms of biological role, probable thiol protease. The sequence is that of Probable cysteine protease RD19D from Arabidopsis thaliana (Mouse-ear cress).